Here is a 482-residue protein sequence, read N- to C-terminus: Glycogen synthase (482 aa).

K15 provides a ligand contact to ADP-alpha-D-glucose.

Belongs to the glycosyltransferase 1 family. Bacterial/plant glycogen synthase subfamily.

It carries out the reaction [(1-&gt;4)-alpha-D-glucosyl](n) + ADP-alpha-D-glucose = [(1-&gt;4)-alpha-D-glucosyl](n+1) + ADP + H(+). Its pathway is glycan biosynthesis; glycogen biosynthesis. Synthesizes alpha-1,4-glucan chains using ADP-glucose. The polypeptide is Glycogen synthase (Elusimicrobium minutum (strain Pei191)).